Reading from the N-terminus, the 97-residue chain is MTKKKRENLGVALEIDGLEKKLSQCRRDLEVVNSRLCGVELSSEARRSLEKEKSSLMNKASNYEKELKLLRQENRKNMLLSVAIFLLLTVIYAYWAL.

Residues Gly10–Leu79 are a coiled coil. A helical membrane pass occupies residues Asn77–Leu97.

The protein resides in the membrane. The chain is Coiled-coil domain-containing protein 167 (CCDC167) from Bos taurus (Bovine).